The following is a 310-amino-acid chain: N-acetyl-gamma-glutamyl-phosphate reductase (310 aa).

Residue C117 is part of the active site.

The protein belongs to the NAGSA dehydrogenase family. Type 2 subfamily.

The protein localises to the cytoplasm. It carries out the reaction N-acetyl-L-glutamate 5-semialdehyde + phosphate + NADP(+) = N-acetyl-L-glutamyl 5-phosphate + NADPH + H(+). Its pathway is amino-acid biosynthesis; L-arginine biosynthesis; N(2)-acetyl-L-ornithine from L-glutamate: step 3/4. Functionally, catalyzes the NADPH-dependent reduction of N-acetyl-5-glutamyl phosphate to yield N-acetyl-L-glutamate 5-semialdehyde. The protein is N-acetyl-gamma-glutamyl-phosphate reductase of Brucella melitensis biotype 1 (strain ATCC 23456 / CCUG 17765 / NCTC 10094 / 16M).